A 461-amino-acid chain; its full sequence is Fumarate hydratase class II (461 aa).

Substrate contacts are provided by residues 99–101 (SGT), Arg-127, 130–133 (HPND), 140–142 (SSN), and Thr-188. His-189 acts as the Proton donor/acceptor in catalysis. Residue Ser-319 is part of the active site. Residues Ser-320 and 325–327 (KVN) each bind substrate.

Belongs to the class-II fumarase/aspartase family. Fumarase subfamily. As to quaternary structure, homotetramer.

Its subcellular location is the cytoplasm. The catalysed reaction is (S)-malate = fumarate + H2O. It participates in carbohydrate metabolism; tricarboxylic acid cycle; (S)-malate from fumarate: step 1/1. In terms of biological role, involved in the TCA cycle. Catalyzes the stereospecific interconversion of fumarate to L-malate. This Chromobacterium violaceum (strain ATCC 12472 / DSM 30191 / JCM 1249 / CCUG 213 / NBRC 12614 / NCIMB 9131 / NCTC 9757 / MK) protein is Fumarate hydratase class II.